The chain runs to 599 residues: Thiamine transporter THI72 (599 aa).

A run of 11 helical transmembrane segments spans residues 42–62, 78–98, 112–132, 174–194, 197–217, 280–300, 333–353, 372–392, 395–415, 447–467, and 484–504; these read WGFWSNFAYWGVLSFNVGMWI, IGAFIIADLLTILFALANSCP, FVFGIYGSALGIIIRILMSIV, LIGFIIFHILTAFCYFMKPYH, YILIWSCVGTFFAMLGMVIYL, IVALLIPATLIPVFGIIGASA, FFCGFCFVMSQISYTISNCGF, GAIFAACVSWACLPWNFYNSS, FLTVMSSFGVVMTPIITVMIC, AIVAWVCGMAPGLPGIAWEVN, and SFFSFLISFFVYWGLCLLFPF. The segment at 553-599 is disordered; the sequence is HEYKPESSDDELPELTKTSSENTKVFEIVHQKDNEKESSTSSEKQIA. Residues S560 and S572 each carry the phosphoserine modification. Residues 579 to 590 are compositionally biased toward basic and acidic residues; sequence EIVHQKDNEKES.

The protein belongs to the purine-cytosine permease (2.A.39) family.

It localises to the membrane. In terms of biological role, low affinity thiamine transporter responsible for intake of thiamine. It is possible that the primary function is the uptake of closely related compounds and that thiamine transport is a secondary activity of these proteins. The protein is Thiamine transporter THI72 (THI72) of Saccharomyces cerevisiae (strain ATCC 204508 / S288c) (Baker's yeast).